The chain runs to 436 residues: Glutamyl-tRNA reductase (436 aa).

Substrate-binding positions include 49 to 52, Ser109, 114 to 116, and Gln120; these read TCNR and EGQ. The Nucleophile role is filled by Cys50. NADP(+) is bound at residue 198–203; the sequence is GAGRMS.

This sequence belongs to the glutamyl-tRNA reductase family. In terms of assembly, homodimer.

It catalyses the reaction (S)-4-amino-5-oxopentanoate + tRNA(Glu) + NADP(+) = L-glutamyl-tRNA(Glu) + NADPH + H(+). Its pathway is porphyrin-containing compound metabolism; protoporphyrin-IX biosynthesis; 5-aminolevulinate from L-glutamyl-tRNA(Glu): step 1/2. It participates in porphyrin-containing compound metabolism; chlorophyll biosynthesis. In terms of biological role, catalyzes the NADPH-dependent reduction of glutamyl-tRNA(Glu) to glutamate 1-semialdehyde (GSA). This is Glutamyl-tRNA reductase from Prochlorococcus marinus (strain MIT 9312).